Here is an 81-residue protein sequence, read N- to C-terminus: MRKILKIVSLLILLLLLVYSFFSPNSQLFVFVQLIIIAFLIGFGINCFVKKERYQGTLYFVIAICNITINLDKINELIQSI.

The N-terminal stretch at 1 to 24 is a signal peptide; sequence MRKILKIVSLLILLLLLVYSFFSP. Residues 25–28 lie on the Extracellular side of the membrane; sequence NSQL. The chain crosses the membrane as a helical span at residues 29–49; sequence FVFVQLIIIAFLIGFGINCFV. Over 50 to 81 the chain is Cytoplasmic; that stretch reads KKERYQGTLYFVIAICNITINLDKINELIQSI.

The protein localises to the cell membrane. This is an uncharacterized protein from Bacillus subtilis (strain 168).